The primary structure comprises 612 residues: Alpha-glycerophosphate oxidase (612 aa).

Position 21–49 (21–49) interacts with FAD; that stretch reads DLLIIGGGITGAGVALQAAASGLDTGLIE. The segment covering 399 to 408 has biased composition (basic and acidic residues); sequence ETSTSEKELD. The segment at 399–418 is disordered; the sequence is ETSTSEKELDPSAVSRGSSF.

This sequence belongs to the FAD-dependent glycerol-3-phosphate dehydrogenase family. The cofactor is FAD.

Its subcellular location is the cytoplasm. It carries out the reaction sn-glycerol 3-phosphate + O2 = dihydroxyacetone phosphate + H2O2. This is Alpha-glycerophosphate oxidase (glpO) from Streptococcus pyogenes serotype M6 (strain ATCC BAA-946 / MGAS10394).